The sequence spans 223 residues: Deoxyribose-phosphate aldolase (223 aa).

Residue Asp-89 is the Proton donor/acceptor of the active site. Residue Lys-152 is the Schiff-base intermediate with acetaldehyde of the active site. Lys-181 (proton donor/acceptor) is an active-site residue.

Belongs to the DeoC/FbaB aldolase family. DeoC type 1 subfamily.

Its subcellular location is the cytoplasm. It carries out the reaction 2-deoxy-D-ribose 5-phosphate = D-glyceraldehyde 3-phosphate + acetaldehyde. Its pathway is carbohydrate degradation; 2-deoxy-D-ribose 1-phosphate degradation; D-glyceraldehyde 3-phosphate and acetaldehyde from 2-deoxy-alpha-D-ribose 1-phosphate: step 2/2. In terms of biological role, catalyzes a reversible aldol reaction between acetaldehyde and D-glyceraldehyde 3-phosphate to generate 2-deoxy-D-ribose 5-phosphate. This Bacillus cereus (strain B4264) protein is Deoxyribose-phosphate aldolase.